We begin with the raw amino-acid sequence, 159 residues long: Small ribosomal subunit protein uS17x (159 aa).

This sequence belongs to the universal ribosomal protein uS17 family.

The protein localises to the cytoplasm. The chain is Small ribosomal subunit protein uS17x (RPS11C) from Arabidopsis thaliana (Mouse-ear cress).